Consider the following 295-residue polypeptide: sn-glycerol-3-phosphate transport system permease protein UgpA (295 aa).

The Cytoplasmic portion of the chain corresponds to 1 to 11; the sequence is MSSSRPVFRSR. The chain crosses the membrane as a helical span at residues 12–32; it reads WLPYLLVAPQLIITVIFFIWP. At 33–80 the chain is on the periplasmic side; sequence AGEALWYSLQSVDPFGFSSQFVGLDNFVTLFHDSYYLDAFWTTIKFST. Residues 76–284 form the ABC transmembrane type-1 domain; sequence IKFSTFVTVS…FLVIVLTVVQ (209 aa). The chain crosses the membrane as a helical span at residues 81-101; that stretch reads FVTVSGLLVSLFFAALVEYIV. The Cytoplasmic segment spans residues 102–109; that stretch reads RGSRFYQT. Residues 110–130 traverse the membrane as a helical segment; sequence LMLLPYAVAPAVAAVLWIFLF. Residues 131–156 lie on the Periplasmic side of the membrane; it reads NPGRGLITHFLAEFGYDWNHAQNSGQ. The chain crosses the membrane as a helical span at residues 157 to 177; sequence AMFLVVFASVWKQISYNFLFF. Topologically, residues 178–207 are cytoplasmic; it reads YAALQSIPRSLIEAAAIDGAGPIRRFFKIA. A helical membrane pass occupies residues 208 to 228; the sequence is LPLIAPVSFFLLVVNLVYAFF. At 229 to 262 the chain is on the periplasmic side; that stretch reads DTFPVIDAATSGGPVQATTTLIYKIYREGFTGLD. Residues 263–283 form a helical membrane-spanning segment; that stretch reads LASSAAQSVVLMFLVIVLTVV. Topologically, residues 284–295 are cytoplasmic; sequence QFRYVEGKVRYQ.

This sequence belongs to the binding-protein-dependent transport system permease family. UgpAE subfamily. The complex is composed of two ATP-binding proteins (UgpC), two transmembrane proteins (UgpA and UgpE) and a solute-binding protein (UgpB).

The protein resides in the cell inner membrane. Functionally, part of the ABC transporter complex UgpBAEC involved in sn-glycerol-3-phosphate (G3P) import. Probably responsible for the translocation of the substrate across the membrane. The chain is sn-glycerol-3-phosphate transport system permease protein UgpA (ugpA) from Escherichia coli O6:K15:H31 (strain 536 / UPEC).